We begin with the raw amino-acid sequence, 310 residues long: UPF0324 membrane protein GSU2818 (310 aa).

9 helical membrane passes run 11-33, 53-72, 79-97, 107-129, 136-158, 193-215, 227-244, 254-273, and 286-308; these read FTIL…VMGI, MLLQ…GEVI, IWYS…YGLG, SALI…APVL, TAVA…PLVG, ALAI…VMAA, IPLF…RTLL, LAGV…GAGL, and LVQA…KLPW.

This sequence belongs to the UPF0324 family.

It localises to the cell membrane. The sequence is that of UPF0324 membrane protein GSU2818 from Geobacter sulfurreducens (strain ATCC 51573 / DSM 12127 / PCA).